A 256-amino-acid chain; its full sequence is NAD(P)H-hydrate epimerase (256 aa).

Positions 1-18 are enriched in basic and acidic residues; sequence MADPRRDPAAESKDRPST. Positions 1-21 are disordered; the sequence is MADPRRDPAAESKDRPSTERV. Residues 23 to 229 enclose the YjeF N-terminal domain; the sequence is AYTADAVRAA…DLGLEPYLRR (207 aa). 74–78 contacts (6S)-NADPHX; sequence DNGGD. Residues Asn75 and Asp135 each coordinate K(+). (6S)-NADPHX-binding positions include 139–147 and Asp172; that span reads GIGRLADRR. K(+) is bound at residue Ser175.

The protein belongs to the NnrE/AIBP family. K(+) is required as a cofactor.

It carries out the reaction (6R)-NADHX = (6S)-NADHX. The enzyme catalyses (6R)-NADPHX = (6S)-NADPHX. Its function is as follows. Catalyzes the epimerization of the S- and R-forms of NAD(P)HX, a damaged form of NAD(P)H that is a result of enzymatic or heat-dependent hydration. This is a prerequisite for the S-specific NAD(P)H-hydrate dehydratase to allow the repair of both epimers of NAD(P)HX. This Microbacterium testaceum (strain StLB037) protein is NAD(P)H-hydrate epimerase.